The chain runs to 548 residues: Thermosome subunit beta (548 aa).

Belongs to the TCP-1 chaperonin family. In terms of assembly, forms a Heterooligomeric complex of two stacked eight-membered rings.

In terms of biological role, molecular chaperone; binds unfolded polypeptides in vitro, and has a weak ATPase activity. The protein is Thermosome subunit beta (thsB) of Aeropyrum pernix (strain ATCC 700893 / DSM 11879 / JCM 9820 / NBRC 100138 / K1).